A 529-amino-acid polypeptide reads, in one-letter code: MMKNSCRLLLILIGLWMANVSLAQKTFRNPIITGMNPDPSICRVGDDFYLVTSTFEYFPGLPVYHSKDLVHWKLIGHALSRPENNPLMGCNASTGGQYAPTLRYHDGTFYVIGTNYGGKGSQGVFYVTAKNPAGPWSDPVWVGNWYVDPSIEFIDGKMYFLSPDNQGSFLLGVMDPETGTFVEALRKVASGLGGSSPEGPHFYKIGDYYYIMSAEGGTGYEHREVIQRSKSPWGPYEPSPVNPVLSNMNCPDHPFQAIGHADLVQLKDGSWWAVCLGIRPVNGKYQHLGRETFLAPVTWDADGWPKVGKDGVVQETYLFPNLPSHVWMEQPVRDDFDQETLGLDWTFIRNPAHSFWSLTEKPGSLRLKGTAINFTTNDSPSFIGRRQAAFNLTASAKVNFIPKVENEEAGLVVRADDKNHYDLLITERNGQRVAMIRKTLKDKVVDTTCKELPATGEVILSITATETTYTFEIKAAHVSAILGTASTRDVSNEVVGGFTGVFIGMYASGNGQANTNPADFDWFDFRCLD.

The N-terminal stretch at 1-23 (MMKNSCRLLLILIGLWMANVSLA) is a signal peptide. Asp-38 functions as the Proton acceptor in the catalytic mechanism. Catalysis depends on Glu-198, which acts as the Proton donor.

This sequence belongs to the glycosyl hydrolase 43 family.

The protein localises to the periplasm. It catalyses the reaction Hydrolysis of terminal non-reducing alpha-L-arabinofuranoside residues in alpha-L-arabinosides.. The protein operates within glucan metabolism; xyloglucan degradation. Its function is as follows. Alpha-L-arabinofuranosidase involved in xyloglucan degradation by mediating the cleavage of terminal non-reducing alpha-L-arabinofuranoside residues in xyloglucan branches, converting the 'S' units to 'X' units. This is Non-reducing end alpha-L-arabinofuranosidase BoGH43B from Bacteroides ovatus (strain ATCC 8483 / DSM 1896 / JCM 5824 / BCRC 10623 / CCUG 4943 / NCTC 11153).